The following is a 198-amino-acid chain: Segregation and condensation protein B (198 aa).

A disordered region spans residues 167–198; that stretch reads PKLADPEAEDPDQSEMDLFFDRFNQSKEQEEE. Over residues 172 to 181 the composition is skewed to acidic residues; sequence PEAEDPDQSE.

It belongs to the ScpB family. As to quaternary structure, homodimer. Homodimerization may be required to stabilize the binding of ScpA to the Smc head domains. Component of a cohesin-like complex composed of ScpA, ScpB and the Smc homodimer, in which ScpA and ScpB bind to the head domain of Smc. The presence of the three proteins is required for the association of the complex with DNA.

It localises to the cytoplasm. Participates in chromosomal partition during cell division. May act via the formation of a condensin-like complex containing Smc and ScpA that pull DNA away from mid-cell into both cell halves. This Listeria innocua serovar 6a (strain ATCC BAA-680 / CLIP 11262) protein is Segregation and condensation protein B.